The sequence spans 556 residues: Formate--tetrahydrofolate ligase (556 aa).

65–72 (TPAGEGKS) is a binding site for ATP.

It belongs to the formate--tetrahydrofolate ligase family.

The enzyme catalyses (6S)-5,6,7,8-tetrahydrofolate + formate + ATP = (6R)-10-formyltetrahydrofolate + ADP + phosphate. It participates in one-carbon metabolism; tetrahydrofolate interconversion. In Streptococcus pneumoniae serotype 19F (strain G54), this protein is Formate--tetrahydrofolate ligase.